Reading from the N-terminus, the 216-residue chain is RNA chaperone ProQ (216 aa).

Residues glutamate 105–lysine 115 show a composition bias toward basic and acidic residues. The tract at residues glutamate 105–lysine 159 is disordered.

It belongs to the ProQ family.

It localises to the cytoplasm. RNA chaperone with significant RNA binding, RNA strand exchange and RNA duplexing activities. The protein is RNA chaperone ProQ of Pseudoalteromonas atlantica (strain T6c / ATCC BAA-1087).